The sequence spans 605 residues: UvrABC system protein C (605 aa).

Residues 13–92 (SEPGVYLMKD…IKRYRPKYNV (80 aa)) form the GIY-YIG domain. The region spanning 205 to 240 (EKLMELLKEKMNESSMNFRFEEAAVYRDKIKSLEEM) is the UVR domain.

The protein belongs to the UvrC family. As to quaternary structure, interacts with UvrB in an incision complex.

It is found in the cytoplasm. In terms of biological role, the UvrABC repair system catalyzes the recognition and processing of DNA lesions. UvrC both incises the 5' and 3' sides of the lesion. The N-terminal half is responsible for the 3' incision and the C-terminal half is responsible for the 5' incision. This Clostridioides difficile (strain 630) (Peptoclostridium difficile) protein is UvrABC system protein C.